A 258-amino-acid polypeptide reads, in one-letter code: UPF0246 protein VV1_0535 (258 aa).

The protein belongs to the UPF0246 family.

This is UPF0246 protein VV1_0535 from Vibrio vulnificus (strain CMCP6).